Consider the following 236-residue polypeptide: Small ribosomal subunit protein uS2c (236 aa).

This sequence belongs to the universal ribosomal protein uS2 family.

The protein localises to the plastid. The sequence is that of Small ribosomal subunit protein uS2c (rps2) from Cuscuta obtusiflora (Peruvian dodder).